Reading from the N-terminus, the 1360-residue chain is MSAGASATGPRRGPPGLEEATSKKKQKDRANLESKDGDARRVSLPRKEPTKDELLLDWRQSADEVIVKLRVGTGPVRLEDVDAAFTDTDCVVRLPDGRQWGGVFFAEIQSSCTKVQARKGGLLQLVLPKKVPLLTWPSLLKPLGTQELVPGLQCQENGQELSPIALEPGSEPRRAKQEARNQKRAQGRGEVGSGAGPGTQAGPSAKRAVHLRRGPEGEGSMDGPGPQGDAPSFLSDSATQVEAEEKLCAPPMNTQTSLLSSEKSLALLTVEKTVSPRNDPVAPVMVQDRDPEPEQEDQVKEEMALGADPTALVEEPESMVNLAFVKNDSYEKGPDSVVVHVYVKEIRRDSSRVLFREQDFTLIFQTRDGNFLRLHPGCGPHTIFRWQVKLRNLIEPEQCTFCFTASRIDICLRKRQSQRWGGLEAPATRGAVGGAKVAVPTGPTPLDSTPPGGGPHPLTGQEEARAVEKEKPKARSEDSGLDGVVARTPLEHVAPKPDPHLASPKPTCMVPPMPHSPVSGDSVEEDEEEEKKVCLPGFTGLVNLGNTCFMNSVIQSLSNTRELRDFFHDRSFEAEINYNNPLGTGGRLAIGFAVLLRALWKGTHQAFQPSKLKAIVASKASQFTGYAQHDAQEFMAFLLDGLHEDLNRIQNKPYTETVDSDGRPDEVVAEEAWQRHKMRNDSFIVDLFQGQYKSKLVCPVCAKVSITFDPFLYLPVPLPQKQKVLPIFYFAREPHSKPIKFLVSVSKENSSASEVLDSLSQSVHVKPENLRLAEVIKNRFHRVFLPSHSLDAVSPTDVLLCFELLSPELAKERVVVLEVQQRPQVPSIPISKCAACQRKQQSEEEKLKRCTRCYRVGYCNQFCQKTHWPDHKGLCRPENIGYPFLVSVPASRLTYARLAQLLEGYARYSVSVFQPPFQPGRMALESQSPGCTTLLSTSSLEAGDSEREPIQPSELQLVTPVAEGDTGAHRVWPPADRGPVPSTSGLSSEMLASGPIEGCPLLAGERVSRPEAAVPGYQHSSESVNTHTPQFFIYKIDASNREQRLEDKGETPLELGDDCSLALVWRNNERLQEFVLVASKELECAEDPGSAGEAARAGHFTLDQCLNLFTRPEVLAPEEAWYCPQCKQHREASKQLLLWRLPNVLIVQLKRFSFRSFIWRDKINDLVEFPVRNLDLSKFCIGQKEEQLPSYDLYAVINHYGGMIGGHYTACARLPNDRSSQRSDVGWRLFDDSTVTTVDESQVVTRYAYVLFYRRRNSPVERPPRASHSEHHPDLGPAAEAAASQASRIWQELEAEEEMVPEGPGPLGPWGPQDWVGPPPRGPTTPDEGCLRYFVLGTVAALVALVLNVFYPLVSQSRWR.

Residues 1-46 form a disordered region; the sequence is MSAGASATGPRRGPPGLEEATSKKKQKDRANLESKDGDARRVSLPR. At 1-1333 the chain is on the cytoplasmic side; the sequence is MSAGASATGP…TTPDEGCLRY (1333 aa). A compositionally biased stretch (basic and acidic residues) spans 28-46; sequence DRANLESKDGDARRVSLPR. The region spanning 51-140 is the CS 1 domain; sequence KDELLLDWRQ…VPLLTWPSLL (90 aa). The tract at residues 163-239 is disordered; the sequence is PIALEPGSEP…APSFLSDSAT (77 aa). Residues 170–181 show a composition bias toward basic and acidic residues; sequence SEPRRAKQEARN. The span at 189–199 shows a compositional bias: gly residues; that stretch reads GEVGSGAGPGT. Position 220 is a phosphoserine (Ser-220). Residues 322-424 enclose the CS 2 domain; it reads LAFVKNDSYE…RQSQRWGGLE (103 aa). The disordered stretch occupies residues 432-482; the sequence is VGGAKVAVPTGPTPLDSTPPGGGPHPLTGQEEARAVEKEKPKARSEDSGLD. Residues 462-478 show a composition bias toward basic and acidic residues; that stretch reads EEARAVEKEKPKARSED. In terms of domain architecture, USP spans 539-1256; the sequence is TGLVNLGNTC…YAYVLFYRRR (718 aa). Cys-548 acts as the Nucleophile in catalysis. The Zn(2+) site is built by Cys-833, Cys-836, Cys-850, Cys-853, Cys-859, Cys-863, His-871, and Cys-875. The MYND-type zinc finger occupies 833-875; it reads CAACQRKQQSEEEKLKRCTRCYRVGYCNQFCQKTHWPDHKGLC. The segment at 965–988 is disordered; the sequence is DTGAHRVWPPADRGPVPSTSGLSS. His-1207 (proton acceptor) is an active-site residue. Residues 1259–1274 are compositionally biased toward basic and acidic residues; sequence PVERPPRASHSEHHPD. Residues 1259–1281 are disordered; sequence PVERPPRASHSEHHPDLGPAAEA. The chain crosses the membrane as a helical span at residues 1334–1354; the sequence is FVLGTVAALVALVLNVFYPLV. Topologically, residues 1355-1360 are lumenal; that stretch reads SQSRWR.

In terms of assembly, interacts with RNF123. Interacts with BIRC2/c-IAP1, BIRC3/c-IAP2 and XIAP/BIRC4. Interacts with HIF1A (via N-terminus).

It localises to the endoplasmic reticulum membrane. The catalysed reaction is Thiol-dependent hydrolysis of ester, thioester, amide, peptide and isopeptide bonds formed by the C-terminal Gly of ubiquitin (a 76-residue protein attached to proteins as an intracellular targeting signal).. Deubiquitinating enzyme that regulates the degradation of various proteins by removing ubiquitin moieties, thereby preventing their proteasomal degradation. Stabilizes RNF123, which promotes CDKN1B degradation and contributes to cell proliferation. Decreases the levels of ubiquitinated proteins during skeletal muscle formation and acts to repress myogenesis. Modulates transcription of major myofibrillar proteins. Also involved in turnover of endoplasmic-reticulum-associated degradation (ERAD) substrates. Mechanistically, deubiquitinates and thereby stabilizes several E3 ligases involved in the ERAD pathway including SYVN1 or MARCHF6. Regulates the stability of other E3 ligases including BIRC2/c-IAP1 and BIRC3/c-IAP2 by preventing their ubiquitination. Required for cells to mount an appropriate response to hypoxia by rescuing HIF1A from degradation in a non-catalytic manner and by mediating the deubiquitination of FUNDC1. Attenuates mitochondrial damage and ferroptosis by targeting and stabilizing NADPH oxidase 4/NOX4. Negatively regulates TNF-alpha- and IL-1beta-triggered NF-kappa-B activation by hydrolyzing 'Lys-27'- and 'Lys-63'-linked polyubiquitin chains from MAP3K7. Modulates also the protein level and aggregation of polyQ-expanded huntingtin/HTT through HSP90AA1. This Mus musculus (Mouse) protein is Ubiquitin carboxyl-terminal hydrolase 19 (Usp19).